The chain runs to 301 residues: Protoheme IX farnesyltransferase (301 aa).

8 consecutive transmembrane segments (helical) span residues 30–50 (VISL…PKAI), 55–75 (IIVS…GGMI), 106–126 (AYAI…LANP), 127–147 (LTAL…SIWL), 152–172 (WWNI…GFAA), 177–197 (FTLL…GHFW), 233–253 (ALMV…YLIV), and 281–301 (FKLS…VKLI).

This sequence belongs to the UbiA prenyltransferase family. Protoheme IX farnesyltransferase subfamily.

The protein resides in the cell membrane. The catalysed reaction is heme b + (2E,6E)-farnesyl diphosphate + H2O = Fe(II)-heme o + diphosphate. It functions in the pathway porphyrin-containing compound metabolism; heme O biosynthesis; heme O from protoheme: step 1/1. Converts heme B (protoheme IX) to heme O by substitution of the vinyl group on carbon 2 of heme B porphyrin ring with a hydroxyethyl farnesyl side group. The protein is Protoheme IX farnesyltransferase of Sulfurisphaera tokodaii (strain DSM 16993 / JCM 10545 / NBRC 100140 / 7) (Sulfolobus tokodaii).